Reading from the N-terminus, the 153-residue chain is LWWLYRDDLLPKPTKFCGYARSMLTTETLKEQCLPYMKVQPHEQNKYEEFWALNDYVSGRYDGRTSFEVLNQRLEMMENKNKANRIFYLALPPSVFEEVTVNIKQVCMSLCGWNRVIIEKPFGRDDASSQALSDHLAGLFNEDQLYRIDHYLG.

Residues Arg21 and Lys120 each coordinate NADP(+). A D-glucose 6-phosphate-binding site is contributed by Lys120.

The protein belongs to the glucose-6-phosphate dehydrogenase family.

The protein resides in the cytoplasm. Its subcellular location is the cytosol. The catalysed reaction is D-glucose 6-phosphate + NADP(+) = 6-phospho-D-glucono-1,5-lactone + NADPH + H(+). The protein operates within carbohydrate degradation; pentose phosphate pathway; D-ribulose 5-phosphate from D-glucose 6-phosphate (oxidative stage): step 1/3. Cytosolic glucose-6-phosphate dehydrogenase that catalyzes the first and rate-limiting step of the oxidative branch within the pentose phosphate pathway/shunt, an alternative route to glycolysis for the dissimilation of carbohydrates and a major source of reducing power and metabolic intermediates for fatty acid and nucleic acid biosynthetic processes. The polypeptide is Glucose-6-phosphate 1-dehydrogenase (Zw) (Drosophila simulans (Fruit fly)).